Consider the following 81-residue polypeptide: Large ribosomal subunit protein uL23 (81 aa).

This sequence belongs to the universal ribosomal protein uL23 family. Part of the 50S ribosomal subunit. Contacts protein L29.

Binds to 23S rRNA. One of the proteins that surrounds the polypeptide exit tunnel on the outside of the ribosome. The protein is Large ribosomal subunit protein uL23 of Pyrobaculum aerophilum (strain ATCC 51768 / DSM 7523 / JCM 9630 / CIP 104966 / NBRC 100827 / IM2).